The sequence spans 533 residues: 2-isopropylmalate synthase (533 aa).

Positions Ile-8–Ala-269 constitute a Pyruvate carboxyltransferase domain. Mn(2+) contacts are provided by Asp-17, His-208, His-210, and Asn-244. Positions Arg-408 to Leu-533 are regulatory domain.

Belongs to the alpha-IPM synthase/homocitrate synthase family. LeuA type 1 subfamily. As to quaternary structure, homodimer. It depends on Mn(2+) as a cofactor.

It is found in the cytoplasm. The enzyme catalyses 3-methyl-2-oxobutanoate + acetyl-CoA + H2O = (2S)-2-isopropylmalate + CoA + H(+). The protein operates within amino-acid biosynthesis; L-leucine biosynthesis; L-leucine from 3-methyl-2-oxobutanoate: step 1/4. Catalyzes the condensation of the acetyl group of acetyl-CoA with 3-methyl-2-oxobutanoate (2-ketoisovalerate) to form 3-carboxy-3-hydroxy-4-methylpentanoate (2-isopropylmalate). This is 2-isopropylmalate synthase from Picosynechococcus sp. (strain ATCC 27264 / PCC 7002 / PR-6) (Agmenellum quadruplicatum).